The primary structure comprises 362 residues: Cap-specific mRNA (nucleoside-2'-O-)-methyltransferase 1 (362 aa).

The region spanning Ser87 to Leu294 is the RrmJ-type SAM-dependent 2'-O-MTase domain. 2 residues coordinate S-adenosyl-L-methionine: Gly130 and Asp207. Lys248 (proton acceptor) is an active-site residue.

Its subcellular location is the nucleus. The catalysed reaction is a 5'-end (N(7)-methyl 5'-triphosphoguanosine)-ribonucleoside in mRNA + S-adenosyl-L-methionine = a 5'-end (N(7)-methyl 5'-triphosphoguanosine)-(2'-O-methyl-ribonucleoside) in mRNA + S-adenosyl-L-homocysteine + H(+). S-adenosyl-L-methionine-dependent methyltransferase that mediates RNA cap1 2'-O-ribose methylation to the 5'-cap structure of spliced leader and U1 small nuclear RNAs. Methylates the ribose of the first nucleotide of a m(7)GpppG-capped RNA to produce m(7)GpppNmp (cap1). Cap1 modification is linked to higher levels of translation. Recognizes a guanosine cap on RNA independent of its N(7) methylation status. The protein is Cap-specific mRNA (nucleoside-2'-O-)-methyltransferase 1 of Trypanosoma cruzi (strain CL Brener).